Here is an 84-residue protein sequence, read N- to C-terminus: Apovitellenin-1 (84 aa).

This sequence belongs to the apovitellenin family. As to quaternary structure, monomer.

Functionally, protein component of the very low density lipoprotein (VLDL) of egg-laying females. Potent lipoprotein lipase inhibitor, preventing the loss of triglycerides from VLDL on their way from the liver to the growing oocytes. The polypeptide is Apovitellenin-1 (Dromaius novaehollandiae (Emu)).